Consider the following 177-residue polypeptide: PBAN-type neuropeptides (177 aa).

An N-terminal signal peptide occupies residues Met-1–Gly-23. The propeptide occupies Glu-24–Lys-54. The tract at residues Glu-28–Arg-73 is disordered. Polar residues predominate over residues Ser-31 to Gly-45. Over residues Cys-47–Thr-59 the composition is skewed to low complexity. Leu-74 is subject to Leucine amide. The propeptide occupies His-78–Glu-113. Leucine amide occurs at positions 124, 154, and 166. Residues Gln-169–Ile-177 constitute a propeptide that is removed on maturation.

Belongs to the pyrokinin family. In terms of tissue distribution, pyrokinins (PK) 1 to 4 are expressed in the retrocerebral complex. PK 1 is expressed in central brain, anntennal lobes and abominal ganglia. PK 2 is expressed in optical lobes and in gnathal, thoracic and abdominal ganglia. PK 3 is expressed in optical lobes and in thoracic and abdominal ganglia (at protein level).

It is found in the secreted. Functionally, pyrokinins mediate visceral muscle contractile activity (myotropic activity). The chain is PBAN-type neuropeptides from Camponotus floridanus (Florida carpenter ant).